Reading from the N-terminus, the 559-residue chain is 2-succinyl-5-enolpyruvyl-6-hydroxy-3-cyclohexene-1-carboxylate synthase (559 aa).

The protein belongs to the TPP enzyme family. MenD subfamily. Homodimer. It depends on Mg(2+) as a cofactor. The cofactor is Mn(2+). Thiamine diphosphate serves as cofactor.

It carries out the reaction isochorismate + 2-oxoglutarate + H(+) = 5-enolpyruvoyl-6-hydroxy-2-succinyl-cyclohex-3-ene-1-carboxylate + CO2. Its pathway is quinol/quinone metabolism; 1,4-dihydroxy-2-naphthoate biosynthesis; 1,4-dihydroxy-2-naphthoate from chorismate: step 2/7. It functions in the pathway quinol/quinone metabolism; menaquinone biosynthesis. Functionally, catalyzes the thiamine diphosphate-dependent decarboxylation of 2-oxoglutarate and the subsequent addition of the resulting succinic semialdehyde-thiamine pyrophosphate anion to isochorismate to yield 2-succinyl-5-enolpyruvyl-6-hydroxy-3-cyclohexene-1-carboxylate (SEPHCHC). This chain is 2-succinyl-5-enolpyruvyl-6-hydroxy-3-cyclohexene-1-carboxylate synthase, found in Edwardsiella ictaluri (strain 93-146).